The chain runs to 312 residues: Ribosomal RNA small subunit methyltransferase H (312 aa).

S-adenosyl-L-methionine-binding positions include 34–36 (AGH), D54, F81, D102, and Q109.

The protein belongs to the methyltransferase superfamily. RsmH family.

It localises to the cytoplasm. The enzyme catalyses cytidine(1402) in 16S rRNA + S-adenosyl-L-methionine = N(4)-methylcytidine(1402) in 16S rRNA + S-adenosyl-L-homocysteine + H(+). In terms of biological role, specifically methylates the N4 position of cytidine in position 1402 (C1402) of 16S rRNA. The chain is Ribosomal RNA small subunit methyltransferase H from Citrifermentans bemidjiense (strain ATCC BAA-1014 / DSM 16622 / JCM 12645 / Bem) (Geobacter bemidjiensis).